Reading from the N-terminus, the 255-residue chain is Type III pantothenate kinase (255 aa).

Residue 7 to 14 (DVGNTRLK) participates in ATP binding. Substrate is bound by residues tyrosine 96 and 103 to 106 (GADR). The active-site Proton acceptor is aspartate 105. Threonine 133 contributes to the ATP binding site. Substrate is bound at residue threonine 183.

The protein belongs to the type III pantothenate kinase family. As to quaternary structure, homodimer. NH4(+) serves as cofactor. Requires K(+) as cofactor.

It localises to the cytoplasm. It carries out the reaction (R)-pantothenate + ATP = (R)-4'-phosphopantothenate + ADP + H(+). The protein operates within cofactor biosynthesis; coenzyme A biosynthesis; CoA from (R)-pantothenate: step 1/5. Functionally, catalyzes the phosphorylation of pantothenate (Pan), the first step in CoA biosynthesis. The polypeptide is Type III pantothenate kinase (Albidiferax ferrireducens (strain ATCC BAA-621 / DSM 15236 / T118) (Rhodoferax ferrireducens)).